The sequence spans 501 residues: Lysine--tRNA ligase (501 aa).

Mg(2+)-binding residues include Glu402 and Glu409.

The protein belongs to the class-II aminoacyl-tRNA synthetase family. As to quaternary structure, homodimer. The cofactor is Mg(2+).

It localises to the cytoplasm. It catalyses the reaction tRNA(Lys) + L-lysine + ATP = L-lysyl-tRNA(Lys) + AMP + diphosphate. In Helicobacter pylori (strain HPAG1), this protein is Lysine--tRNA ligase.